The chain runs to 155 residues: MKIQLIAVGQKMPDWVKVGFEEYQRRFPKDMPFELIEIPAGKRGKNADIKRILEQEGKAMLAAAGKGKVVTLDIPGKPWTTEQLASQLEAWKNDGRDVCLLIGGPEGLSPECKAAAEQSWSLSPLTLPHPMVRVIVAESLYRAWSLTTNHPYHRE.

Residues leucine 72, glycine 103, and 122 to 127 (LSPLTL) contribute to the S-adenosyl-L-methionine site.

This sequence belongs to the RNA methyltransferase RlmH family. In terms of assembly, homodimer.

It localises to the cytoplasm. The catalysed reaction is pseudouridine(1915) in 23S rRNA + S-adenosyl-L-methionine = N(3)-methylpseudouridine(1915) in 23S rRNA + S-adenosyl-L-homocysteine + H(+). Functionally, specifically methylates the pseudouridine at position 1915 (m3Psi1915) in 23S rRNA. The protein is Ribosomal RNA large subunit methyltransferase H of Actinobacillus pleuropneumoniae serotype 5b (strain L20).